Here is a 385-residue protein sequence, read N- to C-terminus: Prophage integrase IntS (385 aa).

Residues 91–172 (NSFSAIYKEW…RCGEVFRYAI (82 aa)) enclose the Core-binding (CB) domain. The Tyr recombinase domain occupies 195–373 (KNFPFLPADQ…QYLDKRREMM (179 aa)). Active-site residues include arginine 234, lysine 261, histidine 324, arginine 327, and histidine 350. Catalysis depends on tyrosine 360, which acts as the O-(3'-phospho-DNA)-tyrosine intermediate.

It belongs to the 'phage' integrase family.

Its function is as follows. Integrase is necessary for integration of the phage into the host genome by site-specific recombination. In conjunction with excisionase, integrase is also necessary for excision of the prophage from the host genome. The protein is Prophage integrase IntS (intS) of Escherichia coli (strain K12).